Here is a 270-residue protein sequence, read N- to C-terminus: Aquaporin-11 (270 aa).

Helical transmembrane passes span Ile5–Cys25 and Phe59–Phe79. The short motif at Asp94–Ser96 is the NPA 1 element. A helical transmembrane segment spans residues Ile120–Ala140. A glycan (N-linked (GlcNAc...) asparagine) is linked at Asn148. Helical transmembrane passes span Ala153–Asn173 and Met184–Gly204. The short motif at Asn207 to Thr209 is the NPA 2 element. The chain crosses the membrane as a helical span at residues Gly220 to Ile240.

It belongs to the MIP/aquaporin (TC 1.A.8) family.

It localises to the membrane. It carries out the reaction H2O(in) = H2O(out). Probable intracellular unorthodox aquaporin that may modulate the water content and osmolytes during anhydrobiosis. The polypeptide is Aquaporin-11 (Milnesium tardigradum (Water bear)).